The following is an 814-amino-acid chain: Probable G-protein coupled receptor 156 (814 aa).

Topologically, residues 1–47 are extracellular; it reads MEPEINCSELCDSFPGQELDRRPLHDLCKTTITSSHHSSKTISSLSP. Asn6 carries an N-linked (GlcNAc...) asparagine glycan. The helical transmembrane segment at 48 to 68 threads the bilayer; sequence VLLGIVWTFLSCGLLLILFFL. Residues 69 to 86 lie on the Cytoplasmic side of the membrane; the sequence is AFTIHCRKNRIVKMSSPN. Residues 87-107 traverse the membrane as a helical segment; it reads LNIVTLLGSCLTYSSAYLFGI. Residues 108–118 lie on the Extracellular side of the membrane; sequence QDVLVGSSMET. Residues 119–139 form a helical membrane-spanning segment; it reads LIQTRLSMLCIGTSLVFGPIL. Residues 140 to 164 are Cytoplasmic-facing; sequence GKSWRLYKVFTQRVPDKRVIIKDLQ. A helical transmembrane segment spans residues 165–185; sequence LLGLVAALLMADVILLMTWVL. Residues 186 to 222 are Extracellular-facing; it reads TDPIQCLQILSVSMTVTGKDVSCTSTSTHFCASRYSD. Residues 223–243 traverse the membrane as a helical segment; the sequence is VWIALIWGCKGLLLLYGAYLA. The Cytoplasmic portion of the chain corresponds to 244 to 257; that stretch reads GLTGHVSSPPVNQS. A helical membrane pass occupies residues 258-278; that stretch reads LTIMVGVNLLVLAAGLLFVVT. At 279–288 the chain is on the extracellular side; that stretch reads RYLHSWPNLV. A helical membrane pass occupies residues 289 to 309; sequence FGLTSGGIFVCTTTINCFIFI. Residues 310 to 814 are Cytoplasmic-facing; it reads PQLKQWKAFE…FKDDLKPTLV (505 aa). Residues 354 to 390 adopt a coiled-coil conformation; the sequence is EKSSMERLLTEKNAVIESLQEQVNNAKEKIVRLMSAE. 3 disordered regions span residues 422 to 545, 557 to 724, and 769 to 792; these read AQGP…SSVI, GLGP…PEQW, and SSSDSSDSGTSDTDPEPTGGLASW. The segment covering 443 to 454 has biased composition (polar residues); the sequence is SQCTSGPSSYAQ. Positions 468 to 484 are enriched in basic and acidic residues; that stretch reads GKEEKISDSKDFSDHLD. Residues 486 to 496 are compositionally biased toward polar residues; the sequence is GCSQKPWTEQS. Residues 523–545 show a composition bias toward basic and acidic residues; it reads QRQRHLENSEEPPERRSRVSSVI. Residues 563-581 are compositionally biased toward polar residues; that stretch reads SLSTAPSCHQQTWKNSAAF. Positions 599–610 are enriched in basic residues; it reads VRRRRAAQRARS. A compositionally biased stretch (polar residues) spans 639–651; the sequence is NGDSPSLAPQTTD. A compositionally biased stretch (low complexity) spans 769 to 780; it reads SSSDSSDSGTSD.

It belongs to the G-protein coupled receptor 3 family. GABA-B receptor subfamily. As to expression, ubiquitous expression both in the CNS and in peripheral tissues. Very high expression in fetal brain and testis relative to expression in other tissues.

The protein resides in the cell membrane. In terms of biological role, orphan G-protein coupled receptor involved in the regulation of hair cell orientation in mechanosensory organs of the inner ear. It is required to trigger a 180 degree reversal in hair cell orientation, creating a virtual line of polarity reversal (LPR) across which stereociliary bundles are arranged in opposite orientations. This is Probable G-protein coupled receptor 156 (GPR156) from Homo sapiens (Human).